A 1094-amino-acid chain; its full sequence is DNA polymerase delta catalytic subunit (1094 aa).

Cys1003, Cys1006, Cys1016, and Cys1019 together coordinate Zn(2+). The CysA-type zinc finger occupies 1003–1019 (CIGCNSSIKKPPLCNHC). Residues Cys1049, Cys1052, Cys1062, and Cys1067 each contribute to the [4Fe-4S] cluster site. A CysB motif motif is present at residues 1049 to 1067 (CQRCQGNLHVDVICMNRDC).

Belongs to the DNA polymerase type-B family. In terms of assembly, heterodimer composed of a catalytic subunit POLD and a small regulatory subunit. Requires [4Fe-4S] cluster as cofactor. Mg(2+) serves as cofactor.

It localises to the nucleus. The enzyme catalyses DNA(n) + a 2'-deoxyribonucleoside 5'-triphosphate = DNA(n+1) + diphosphate. Its activity is regulated as follows. The small regulatory subunit delta and PCNA1 increase POLD catalytic activity. Its function is as follows. This polymerase possesses two enzymatic activities: DNA synthesis (polymerase) and an exonucleolytic activity that degrades single-stranded DNA in the 3'- to 5'-direction. This chain is DNA polymerase delta catalytic subunit (POLD), found in Plasmodium falciparum (isolate K1 / Thailand).